Reading from the N-terminus, the 372-residue chain is Germination protease (372 aa).

The propeptide occupies 1–15 (MNRSIDLSMYSVRTD).

Belongs to the peptidase A25 family. As to quaternary structure, homotetramer. Autoproteolytically processed. The inactive tetrameric zymogen termed p46 autoprocesses to a smaller form termed p41, which is active only during spore germination.

It catalyses the reaction Endopeptidase action with P4 Glu or Asp, P1 preferably Glu &gt; Asp, P1' hydrophobic and P2' Ala.. Initiates the rapid degradation of small, acid-soluble proteins during spore germination. The sequence is that of Germination protease from Geobacillus sp. (strain WCH70).